A 351-amino-acid polypeptide reads, in one-letter code: 1-aminocyclopropane-1-carboxylate oxidase homolog 4 (351 aa).

A Fe2OG dioxygenase domain is found at 200 to 304 (KSQYMVGQHY…AIVFSTFMRA (105 aa)). H224, D226, and H280 together coordinate Fe cation. R291 contacts 2-oxoglutarate.

The protein belongs to the iron/ascorbate-dependent oxidoreductase family. The cofactor is Fe(2+).

The sequence is that of 1-aminocyclopropane-1-carboxylate oxidase homolog 4 from Arabidopsis thaliana (Mouse-ear cress).